Consider the following 135-residue polypeptide: 6,7-dimethyl-8-ribityllumazine synthase (135 aa).

Residues F12, 44–46, and 68–70 each bind 5-amino-6-(D-ribitylamino)uracil; these read AYD and CVI. 73–74 contacts (2S)-2-hydroxy-3-oxobutyl phosphate; the sequence is AT. H76 acts as the Proton donor in catalysis. L101 is a 5-amino-6-(D-ribitylamino)uracil binding site. (2S)-2-hydroxy-3-oxobutyl phosphate is bound at residue R116.

Belongs to the DMRL synthase family.

The enzyme catalyses (2S)-2-hydroxy-3-oxobutyl phosphate + 5-amino-6-(D-ribitylamino)uracil = 6,7-dimethyl-8-(1-D-ribityl)lumazine + phosphate + 2 H2O + H(+). Its pathway is cofactor biosynthesis; riboflavin biosynthesis; riboflavin from 2-hydroxy-3-oxobutyl phosphate and 5-amino-6-(D-ribitylamino)uracil: step 1/2. Catalyzes the formation of 6,7-dimethyl-8-ribityllumazine by condensation of 5-amino-6-(D-ribitylamino)uracil with 3,4-dihydroxy-2-butanone 4-phosphate. This is the penultimate step in the biosynthesis of riboflavin. The polypeptide is 6,7-dimethyl-8-ribityllumazine synthase (Methanoculleus marisnigri (strain ATCC 35101 / DSM 1498 / JR1)).